A 262-amino-acid polypeptide reads, in one-letter code: Succinate dehydrogenase [ubiquinone] iron-sulfur subunit (262 aa).

The region spanning 21–110 (KLIKIFRWDS…NNIIYVYPLP (90 aa)) is the 2Fe-2S ferredoxin-type domain. The [2Fe-2S] cluster site is built by C73, C78, C81, and C93. Residues 154 to 184 (DRLYLDGLYECILCACCSASCPSYWWNHDKY) form the 4Fe-4S ferredoxin-type domain. Positions 164, 167, and 170 each coordinate [4Fe-4S] cluster. C174 serves as a coordination point for [3Fe-4S] cluster. W179 serves as a coordination point for a ubiquinone. 2 residues coordinate [3Fe-4S] cluster: C221 and C227. C231 contacts [4Fe-4S] cluster.

Belongs to the succinate dehydrogenase/fumarate reductase iron-sulfur protein family. As to quaternary structure, component of complex II composed of four subunits: a flavoprotein (FP), an iron-sulfur protein (IP), and a cytochrome b composed of a large and a small subunit. [2Fe-2S] cluster is required as a cofactor. The cofactor is [3Fe-4S] cluster. Requires [4Fe-4S] cluster as cofactor.

It localises to the mitochondrion inner membrane. The enzyme catalyses a quinone + succinate = fumarate + a quinol. Its pathway is carbohydrate metabolism; tricarboxylic acid cycle; fumarate from succinate (eukaryal route): step 1/1. Iron-sulfur protein (IP) subunit of succinate dehydrogenase (SDH) that is involved in complex II of the mitochondrial electron transport chain and is responsible for transferring electrons from succinate to ubiquinone (coenzyme Q). This is Succinate dehydrogenase [ubiquinone] iron-sulfur subunit (SDH2) from Cyanidium caldarium (Red alga).